The primary structure comprises 402 residues: Probable tRNA pseudouridine synthase tag-124 (402 aa).

The Nucleophile role is filled by D85. Positions S383–L402 are disordered.

Belongs to the tRNA pseudouridine synthase TruA family.

The enzyme catalyses a uridine in tRNA = a pseudouridine in tRNA. In terms of biological role, formation of pseudouridine at position 38 and 39 in the anticodon stem and loop of transfer RNAs. This is Probable tRNA pseudouridine synthase tag-124 (tag-124) from Caenorhabditis elegans.